The primary structure comprises 239 residues: tRNA (guanine-N(1)-)-methyltransferase (239 aa).

Residues G108 and 127–132 each bind S-adenosyl-L-methionine; that span reads LGDYVL.

The protein belongs to the RNA methyltransferase TrmD family. As to quaternary structure, homodimer.

The protein localises to the cytoplasm. The enzyme catalyses guanosine(37) in tRNA + S-adenosyl-L-methionine = N(1)-methylguanosine(37) in tRNA + S-adenosyl-L-homocysteine + H(+). Functionally, specifically methylates guanosine-37 in various tRNAs. The protein is tRNA (guanine-N(1)-)-methyltransferase of Streptococcus pneumoniae serotype 19F (strain G54).